The chain runs to 507 residues: ATP synthase subunit alpha, chloroplastic (507 aa).

Residue 170 to 177 (GDRQTGKT) coordinates ATP. Threonine 257 is modified (phosphothreonine).

This sequence belongs to the ATPase alpha/beta chains family. As to quaternary structure, F-type ATPases have 2 components, CF(1) - the catalytic core - and CF(0) - the membrane proton channel. CF(1) has five subunits: alpha(3), beta(3), gamma(1), delta(1), epsilon(1). CF(0) has four main subunits: a, b, b' and c.

It localises to the plastid. The protein localises to the chloroplast thylakoid membrane. The catalysed reaction is ATP + H2O + 4 H(+)(in) = ADP + phosphate + 5 H(+)(out). Its function is as follows. Produces ATP from ADP in the presence of a proton gradient across the membrane. The alpha chain is a regulatory subunit. In Crucihimalaya wallichii (Rock-cress), this protein is ATP synthase subunit alpha, chloroplastic.